Reading from the N-terminus, the 514-residue chain is Cytochrome P450 monooxygenase MO6277 (514 aa).

The helical transmembrane segment at 6-26 (LTVLALLGGTLLLYCSGLVIY) threads the bilayer. Heme is bound at residue cysteine 457.

Belongs to the cytochrome P450 family. Heme is required as a cofactor.

It is found in the membrane. It catalyses the reaction polyporic acid + reduced [NADPH--hemoprotein reductase] + O2 = ascocorynin + oxidized [NADPH--hemoprotein reductase] + H2O + H(+). It participates in secondary metabolite biosynthesis. Its function is as follows. Cytochrome P450 monooxygenase that hydroxylates polyporic acid produced by the nonribosomal peptide synthetase acyN to produce the less toxic metabolite ascocorynin. The hydrophobic substrate polyporic acid might approach the active site from the membrane and, after hydroxylation into ascocorynin, leaves into the cytoplasm. MO6277 appears vital to avoid high-level accumulation of polyporic acid in the fungal membrane. This is Cytochrome P450 monooxygenase MO6277 from Ascocoryne sarcoides (Purple jellydisc fungus).